Consider the following 1018-residue polypeptide: UPF0182 protein Francci3_3781 (1018 aa).

7 helical membrane passes run 13–33, 60–80, 109–129, 167–187, 208–228, 250–270, and 283–303; these read TKVLVPVLLVIVLAITIIAIF, ILLFVLFGVVMAIIVGTNIVL, MLLILLAVTTLFGLAAGLSAA, FLLGFLLTAVLLSLLVTLLTH, AHISVLLGLLALLKAWAYYLD, AVLPAKLILLFISLACAVLFI, and LGAGILVLSSVVIGGIYPAIV. 2 stretches are compositionally biased toward low complexity: residues 886-896 and 960-980; these read TTDAGQDGTPA and SSPAATPPAATATRAGASVPA. 2 disordered regions span residues 886–920 and 960–1018; these read TTDAGQDGTPAPRSGQGGAGVPPPGQTALQDAVGD and SSPA…PAPG. The span at 981 to 995 shows a compositional bias: pro residues; sequence SPVPASPAAKPPAPS.

Belongs to the UPF0182 family.

It is found in the cell membrane. This Frankia casuarinae (strain DSM 45818 / CECT 9043 / HFP020203 / CcI3) protein is UPF0182 protein Francci3_3781.